A 200-amino-acid chain; its full sequence is Small ribosomal subunit protein uS4 (200 aa).

Residues 22–42 (TGKELEKRPYAPGPHGPNQRK) form a disordered region. The region spanning 92 to 152 (ARLDNLVYRM…EKSNSLVVVK (61 aa)) is the S4 RNA-binding domain.

Belongs to the universal ribosomal protein uS4 family. As to quaternary structure, part of the 30S ribosomal subunit. Contacts protein S5. The interaction surface between S4 and S5 is involved in control of translational fidelity.

One of the primary rRNA binding proteins, it binds directly to 16S rRNA where it nucleates assembly of the body of the 30S subunit. Functionally, with S5 and S12 plays an important role in translational accuracy. The protein is Small ribosomal subunit protein uS4 of Bacillus cereus (strain B4264).